Reading from the N-terminus, the 492-residue chain is Probable cytochrome P450 513A3 (492 aa).

A helical membrane pass occupies residues 1 to 21; that stretch reads MTSLTLYLIIFSIILYLFVNR. Cysteine 437 contacts heme.

It belongs to the cytochrome P450 family. It depends on heme as a cofactor.

It is found in the membrane. In Dictyostelium discoideum (Social amoeba), this protein is Probable cytochrome P450 513A3 (cyp513A3).